Here is a 298-residue protein sequence, read N- to C-terminus: Acetylglutamate kinase (298 aa).

Residues 69-70, Arg-91, and Asn-191 each bind substrate; that span reads GG.

This sequence belongs to the acetylglutamate kinase family. ArgB subfamily.

The protein localises to the cytoplasm. The catalysed reaction is N-acetyl-L-glutamate + ATP = N-acetyl-L-glutamyl 5-phosphate + ADP. The protein operates within amino-acid biosynthesis; L-arginine biosynthesis; N(2)-acetyl-L-ornithine from L-glutamate: step 2/4. Functionally, catalyzes the ATP-dependent phosphorylation of N-acetyl-L-glutamate. This chain is Acetylglutamate kinase, found in Neisseria gonorrhoeae (strain ATCC 700825 / FA 1090).